Consider the following 419-residue polypeptide: Putative zinc metalloprotease spyM18_2031 (419 aa).

Histidine 18 provides a ligand contact to Zn(2+). Glutamate 19 is a catalytic residue. A Zn(2+)-binding site is contributed by histidine 22. The next 4 helical transmembrane spans lie at 169–191, 301–323, 343–365, and 392–411; these read LITN…ILLV, LAWS…FSLN, LESV…LIPI, and AYIT…AVTW. A PDZ domain is found at 175-274; that stretch reads GPMNNFILGI…LKTVAVKPQK (100 aa).

It belongs to the peptidase M50B family. The cofactor is Zn(2+).

Its subcellular location is the cell membrane. This is Putative zinc metalloprotease spyM18_2031 from Streptococcus pyogenes serotype M18 (strain MGAS8232).